A 95-amino-acid polypeptide reads, in one-letter code: Ribonuclease P protein component 1 (95 aa).

It belongs to the eukaryotic/archaeal RNase P protein component 1 family. In terms of assembly, consists of a catalytic RNA component and at least 4 protein subunits. Forms a subcomplex with Rnp4 which stimulates the catalytic RNA.

Its subcellular location is the cytoplasm. The enzyme catalyses Endonucleolytic cleavage of RNA, removing 5'-extranucleotides from tRNA precursor.. Its function is as follows. Part of ribonuclease P, a protein complex that generates mature tRNA molecules by cleaving their 5'-ends. The sequence is that of Ribonuclease P protein component 1 from Methanocaldococcus jannaschii (strain ATCC 43067 / DSM 2661 / JAL-1 / JCM 10045 / NBRC 100440) (Methanococcus jannaschii).